Reading from the N-terminus, the 503-residue chain is Cytochrome P450 monooxygenase roqO (503 aa).

Residues 11-31 traverse the membrane as a helical segment; the sequence is YSGTACAISLFIFGITLLFPF. An N-linked (GlcNAc...) asparagine glycan is attached at asparagine 205. Cysteine 444 provides a ligand contact to heme.

Belongs to the cytochrome P450 family. Requires heme as cofactor.

The protein resides in the membrane. It participates in alkaloid biosynthesis. Cytochrome P450 monooxygenase; part of the gene cluster that mediates the biosynthesis of the mycotoxin meleagrin. The first stage is catalyzed by the dipeptide synthase roqA which condenses histidine and tryptophan to produce histidyltryptophanyldiketopiperazine (HTD). HTD is then converted to roquefortine C through two possible pathways. In the first pathway, prenyltransferase roqD transforms HTD to the intermediate roquefortine D, which is in turn converted to roquefortine C by the cytochrome P450 monooxygenase roqR. In the second pathway, HTD is first converted to the intermediate dehydrohistidyltryptophanyldi-ketopiperazine (DHTD) by roqR which is then prenylated by roqD to form roquefortine C. Roquefortine C can be further transformed to meleagrin via three more reactions including oxydation to glandicolin A by roqM, which is further reduced to glandicoline B by roqO. Finally, glandicoline B is converted to meleagrin by the glandicoline B O-methyltransferase roqN. More studies identified further branching and additional metabolites produced by the roquefortine/meleagrin cluster, including roquefortine F, roquefortine L, roquefortine M, roquefortine N and neoxaline. The protein is Cytochrome P450 monooxygenase roqO of Penicillium rubens (strain ATCC 28089 / DSM 1075 / NRRL 1951 / Wisconsin 54-1255) (Penicillium chrysogenum).